We begin with the raw amino-acid sequence, 441 residues long: MKIFNKLIFLIIQCILIISVTNAQVDCGGTDNPYPIYNELPVLINQTTYGKLYKIGPPDNLINIIELYGTPYQRGLAQGQLLKSEINDIFDNFFGYITVMVNELVTKYADYLPKFLVDALEEGGVGLALDITADLTKKYTPKSFFEEMQGIADGSGIEYKTILRLHMFPELIKAACSMVGAYNSATLNKGLLQLRALDFGFDPMNPLRLHPTVMIYHPESVSAGGDGGHEFATLSWAGFLGTLTGYSQHVGICEKYWFGYNGTSSREGIPFHFLLREIIQFDESIDEALNRIINADRTCSVFMGLGSNQTNTFKAVEYSYEYVRVFDDQTPFPSYVPTPSAHPVIQDVVYIDKFVQPSNHQCLASVLQKSLGSIDVTSLINAAAQLQTGDIHIGIYDYQQNQMYVSVGTQSGPYPPPSNFTIVPAYARQFIQIDLNSFFNQ.

The signal sequence occupies residues 1–23 (MKIFNKLIFLIIQCILIISVTNA). N-linked (GlcNAc...) asparagine glycosylation is found at N45, N261, N308, and N419.

The protein resides in the secreted. The polypeptide is Protein dcd1A (dcd1A) (Dictyostelium discoideum (Social amoeba)).